Reading from the N-terminus, the 359-residue chain is Protein RecA (359 aa).

64 to 71 (GHESSGKT) is a binding site for ATP. Positions 329–359 (KYSNKDSNDSPKEGSKIKTKVNPAVTQDELI) are disordered. Residues 331–344 (SNKDSNDSPKEGSK) are compositionally biased toward basic and acidic residues.

The protein belongs to the RecA family.

The protein resides in the cytoplasm. Functionally, can catalyze the hydrolysis of ATP in the presence of single-stranded DNA, the ATP-dependent uptake of single-stranded DNA by duplex DNA, and the ATP-dependent hybridization of homologous single-stranded DNAs. It interacts with LexA causing its activation and leading to its autocatalytic cleavage. In Francisella tularensis subsp. tularensis (strain FSC 198), this protein is Protein RecA.